A 131-amino-acid chain; its full sequence is Glycine cleavage system H protein (131 aa).

The Lipoyl-binding domain maps to 24–106 (TVRVGITDYA…YGEGWLVELQ (83 aa)). Lys-65 is modified (N6-lipoyllysine).

The protein belongs to the GcvH family. In terms of assembly, the glycine cleavage system is composed of four proteins: P, T, L and H. (R)-lipoate is required as a cofactor.

Its function is as follows. The glycine cleavage system catalyzes the degradation of glycine. The H protein shuttles the methylamine group of glycine from the P protein to the T protein. This is Glycine cleavage system H protein from Mycolicibacterium gilvum (strain PYR-GCK) (Mycobacterium gilvum (strain PYR-GCK)).